A 127-amino-acid chain; its full sequence is Large ribosomal subunit protein bL17 (127 aa).

Belongs to the bacterial ribosomal protein bL17 family. Part of the 50S ribosomal subunit. Contacts protein L32.

This Legionella pneumophila (strain Paris) protein is Large ribosomal subunit protein bL17.